Here is a 429-residue protein sequence, read N- to C-terminus: Histidinol dehydrogenase (429 aa).

3 residues coordinate NAD(+): Tyr127, Gln188, and Asn211. Substrate-binding residues include Ser234, Gln256, and His259. Residues Gln256 and His259 each coordinate Zn(2+). Catalysis depends on proton acceptor residues Glu324 and His325. Residues His325, Asp358, Glu412, and His417 each contribute to the substrate site. Asp358 serves as a coordination point for Zn(2+). Zn(2+) is bound at residue His417.

The protein belongs to the histidinol dehydrogenase family. Requires Zn(2+) as cofactor.

The enzyme catalyses L-histidinol + 2 NAD(+) + H2O = L-histidine + 2 NADH + 3 H(+). It functions in the pathway amino-acid biosynthesis; L-histidine biosynthesis; L-histidine from 5-phospho-alpha-D-ribose 1-diphosphate: step 9/9. Its function is as follows. Catalyzes the sequential NAD-dependent oxidations of L-histidinol to L-histidinaldehyde and then to L-histidine. The chain is Histidinol dehydrogenase from Bacillus thuringiensis subsp. konkukian (strain 97-27).